The chain runs to 359 residues: Protein-glutamate methylesterase/protein-glutamine glutaminase 1 (359 aa).

The Response regulatory domain maps to 4-121 (SVLIVDDSAV…RAFLLEAAKE (118 aa)). At Asp-55 the chain carries 4-aspartylphosphate. The CheB-type methylesterase domain maps to 169–354 (YRTTEKIIAI…MSLERIAHML (186 aa)). Active-site residues include Ser-181, His-207, and Asp-303.

Belongs to the CheB family. Phosphorylated by CheA. Phosphorylation of the N-terminal regulatory domain activates the methylesterase activity.

Its subcellular location is the cytoplasm. The catalysed reaction is [protein]-L-glutamate 5-O-methyl ester + H2O = L-glutamyl-[protein] + methanol + H(+). The enzyme catalyses L-glutaminyl-[protein] + H2O = L-glutamyl-[protein] + NH4(+). Its function is as follows. Involved in chemotaxis. Part of a chemotaxis signal transduction system that modulates chemotaxis in response to various stimuli. Catalyzes the demethylation of specific methylglutamate residues introduced into the chemoreceptors (methyl-accepting chemotaxis proteins or MCP) by CheR. Also mediates the irreversible deamidation of specific glutamine residues to glutamic acid. The protein is Protein-glutamate methylesterase/protein-glutamine glutaminase 1 of Chromobacterium violaceum (strain ATCC 12472 / DSM 30191 / JCM 1249 / CCUG 213 / NBRC 12614 / NCIMB 9131 / NCTC 9757 / MK).